Consider the following 567-residue polypeptide: Hexose transporter HXT15 (567 aa).

Over residues 1-19 (MASEQSSPEINADNLNSSA) the composition is skewed to polar residues. Positions 1 to 32 (MASEQSSPEINADNLNSSAADVHVQPPGEKEW) are disordered. The Cytoplasmic segment spans residues 1-55 (MASEQSSPEINADNLNSSAADVHVQPPGEKEWSDGFYDKEVINGNTPDAPKRGFL). Residues 56–76 (GYLIIYLLCYPVSFGGFLPGW) traverse the membrane as a helical segment. The Extracellular segment spans residues 77-112 (DSGITAGFINMDNFKMNFGSYKHSTGEYYLSNVRMG). Residues 113-133 (LLVAMFSVGCSIGGVAFARLA) traverse the membrane as a helical segment. Topologically, residues 134 to 139 (DTLGRR) are cytoplasmic. A helical transmembrane segment spans residues 140-160 (LAIVIVVLVYMVGAIIQISSN). At 161–170 (HKWYQYFVGK) the chain is on the extracellular side. The chain crosses the membrane as a helical span at residues 171–191 (IIYGLGAGGCSVLCPMLLSEI). The Cytoplasmic segment spans residues 192-197 (APTDLR). The chain crosses the membrane as a helical span at residues 198-218 (GGLVSLYQLNMTFGIFLGYCS). At 219–232 (VYGTRKYSNTAQWR) the chain is on the extracellular side. Residues 233–253 (IPVGLCFLWALIIIVGMLLVP) form a helical membrane-spanning segment. Residues 254–336 (ESPRYLIECE…VQTFLQLTGE (83 aa)) are Cytoplasmic-facing. The chain crosses the membrane as a helical span at residues 337–353 (NYFFFYGTTIFKSVGLT). Over 354–359 (DGFETS) the chain is Extracellular. A helical membrane pass occupies residues 360–377 (IVLGTVNFFSTIIAVMVV). At 378 to 384 (DKIGRRK) the chain is on the cytoplasmic side. A helical transmembrane segment spans residues 385 to 405 (CLLFGAASMMACMVIFASIGV). Residues 406–427 (KCLYPHGQDGPSSKGAGNAMIV) are Extracellular-facing. Residues 428-448 (FTCFYIFCFATTWAPVAYIVV) form a helical membrane-spanning segment. The Cytoplasmic segment spans residues 449 to 465 (AESFPSKVKSKAMSIST). The chain crosses the membrane as a helical span at residues 466–486 (AFNWLWQFLIGFFTPFITGSI). Position 487 (His487) is a topological domain, extracellular. A helical transmembrane segment spans residues 488-508 (FYYGYVFVGCLVAMFLYVFFF). At 509–567 (LPETIGLSLEEIQLLYEEGIKPWKSASWVPPSRRGASSRETEAKKKSWKEVLKFPKSFN) the chain is on the cytoplasmic side. A disordered region spans residues 533–555 (SASWVPPSRRGASSRETEAKKKS). Positions 545–555 (SSRETEAKKKS) are enriched in basic and acidic residues.

Belongs to the major facilitator superfamily. Sugar transporter (TC 2.A.1.1) family.

It is found in the membrane. Its function is as follows. Probable glucose transporter. This chain is Hexose transporter HXT15 (HXT15), found in Saccharomyces cerevisiae (strain ATCC 204508 / S288c) (Baker's yeast).